The sequence spans 367 residues: UDP-N-acetylglucosamine--N-acetylmuramyl-(pentapeptide) pyrophosphoryl-undecaprenol N-acetylglucosamine transferase (367 aa).

UDP-N-acetyl-alpha-D-glucosamine is bound by residues 15 to 17 (TGG), Asn-127, Arg-163, Ser-191, Ile-249, and Gln-294.

This sequence belongs to the glycosyltransferase 28 family. MurG subfamily.

The protein localises to the cell inner membrane. It carries out the reaction di-trans,octa-cis-undecaprenyl diphospho-N-acetyl-alpha-D-muramoyl-L-alanyl-D-glutamyl-meso-2,6-diaminopimeloyl-D-alanyl-D-alanine + UDP-N-acetyl-alpha-D-glucosamine = di-trans,octa-cis-undecaprenyl diphospho-[N-acetyl-alpha-D-glucosaminyl-(1-&gt;4)]-N-acetyl-alpha-D-muramoyl-L-alanyl-D-glutamyl-meso-2,6-diaminopimeloyl-D-alanyl-D-alanine + UDP + H(+). It participates in cell wall biogenesis; peptidoglycan biosynthesis. Cell wall formation. Catalyzes the transfer of a GlcNAc subunit on undecaprenyl-pyrophosphoryl-MurNAc-pentapeptide (lipid intermediate I) to form undecaprenyl-pyrophosphoryl-MurNAc-(pentapeptide)GlcNAc (lipid intermediate II). This Burkholderia ambifaria (strain MC40-6) protein is UDP-N-acetylglucosamine--N-acetylmuramyl-(pentapeptide) pyrophosphoryl-undecaprenol N-acetylglucosamine transferase.